The chain runs to 416 residues: Subtilisin-like protease 12 (416 aa).

Residues 1–19 (MSILKMMLIYFAIFWVVNA) form the signal peptide. The propeptide occupies 20 to 116 (AQLLDIDSQG…VEPNKEMQVA (97 aa)). One can recognise an Inhibitor I9 domain in the interval 35–115 (YIVVMKDRVS…FVEPNKEMQV (81 aa)). 3 N-linked (GlcNAc...) asparagine glycosylation sites follow: N123, N136, and N150. A Peptidase S8 domain is found at 125-416 (TWGLSRISHK…NKLLYNGSGA (292 aa)). Catalysis depends on charge relay system residues D157 and H188. 4 N-linked (GlcNAc...) asparagine glycosylation sites follow: N249, N305, N334, and N353. Catalysis depends on S362, which acts as the Charge relay system. N-linked (GlcNAc...) asparagine glycans are attached at residues N404 and N412.

It belongs to the peptidase S8 family.

The protein localises to the secreted. Its function is as follows. Secreted subtilisin-like serine protease with keratinolytic activity that contributes to pathogenicity. The protein is Subtilisin-like protease 12 (SUB12) of Arthroderma benhamiae (strain ATCC MYA-4681 / CBS 112371) (Trichophyton mentagrophytes).